Here is a 278-residue protein sequence, read N- to C-terminus: HAUS augmin-like complex subunit 1 (278 aa).

Coiled coils occupy residues Arg-49 to Ser-79, Ser-124 to Asn-177, and Ser-249 to Glu-277.

Belongs to the HAUS1 family. As to quaternary structure, component of the HAUS augmin-like complex. The complex interacts with the gamma-tubulin ring complex and this interaction is required for spindle assembly. Associates with microtubules. The interaction with microtubules is strong during mitosis, while it is weak or absent during interphase. It is unclear whether this interaction is direct or indirect. Interacts with EML3 (phosphorylated at 'Thr-881'). In terms of tissue distribution, widely expressed. Expressed in pancreas, kidney, skeletal muscle, liver and heart. Weakly expressed in lung, brain and placenta.

It is found in the cytoplasm. The protein resides in the cytoskeleton. It localises to the microtubule organizing center. Its subcellular location is the centrosome. The protein localises to the spindle. It is found in the spindle pole. Functionally, contributes to mitotic spindle assembly, maintenance of centrosome integrity and completion of cytokinesis as part of the HAUS augmin-like complex. This chain is HAUS augmin-like complex subunit 1 (HAUS1), found in Homo sapiens (Human).